The sequence spans 424 residues: L-glutamine:2-deoxy-scyllo-inosose aminotransferase (424 aa).

N6-(pyridoxal phosphate)lysine is present on Lys-202.

It belongs to the DegT/DnrJ/EryC1 family. L-glutamine:2-deoxy-scyllo-inosose/scyllo-inosose aminotransferase subfamily. Requires pyridoxal 5'-phosphate as cofactor.

It carries out the reaction 2-deoxy-L-scyllo-inosose + L-glutamine = 2-deoxy-scyllo-inosamine + 2-oxoglutaramate. The catalysed reaction is 3-amino-2,3-dideoxy-scyllo-inosose + L-glutamine = 2-deoxystreptamine + 2-oxoglutaramate. It participates in metabolic intermediate biosynthesis; 2-deoxystreptamine biosynthesis; 2-deoxystreptamine from D-glucose 6-phosphate: step 2/4. It functions in the pathway antibiotic biosynthesis; lividomycin biosynthesis. Functionally, catalyzes the PLP-dependent transamination of 2-deoxy-scyllo-inosose (2-DOI) to form 2-deoxy-scyllo-inosamine (2-DOIA) using L-glutamine as the amino donor. Also catalyzes the transamination of 3-amino-2,3-dideoxy-scyllo-inosose (keto-2-DOIA) into 2-deoxystreptamine (2-DOS). This Streptomyces lividus protein is L-glutamine:2-deoxy-scyllo-inosose aminotransferase (livS).